A 121-amino-acid chain; its full sequence is Small ribosomal subunit protein uS13 (121 aa).

The disordered stretch occupies residues 91 to 121 (HRRGLPVRGQNSKNNARTRKGPRRTVANKKK). Positions 106 to 121 (ARTRKGPRRTVANKKK) are enriched in basic residues.

It belongs to the universal ribosomal protein uS13 family. In terms of assembly, part of the 30S ribosomal subunit. Forms a loose heterodimer with protein S19. Forms two bridges to the 50S subunit in the 70S ribosome.

In terms of biological role, located at the top of the head of the 30S subunit, it contacts several helices of the 16S rRNA. In the 70S ribosome it contacts the 23S rRNA (bridge B1a) and protein L5 of the 50S subunit (bridge B1b), connecting the 2 subunits; these bridges are implicated in subunit movement. Contacts the tRNAs in the A and P-sites. The protein is Small ribosomal subunit protein uS13 of Bacillus cereus (strain ZK / E33L).